The primary structure comprises 383 residues: Outer membrane protein S2 (383 aa).

An N-terminal signal peptide occupies residues 1 to 21 (MKRKVLALVIPALLAAGAAHA).

Belongs to the Gram-negative porin family. As to quaternary structure, homotrimer.

The protein resides in the cell outer membrane. Forms pores that allow passive diffusion of small molecules across the outer membrane. The polypeptide is Outer membrane protein S2 (ompS2) (Salmonella typhi).